Consider the following 373-residue polypeptide: MPLINLPEFSAELLSEFDARKAERIDTPVIQPAEPFLDIAGEDLRRRIFMTESETGASLCLRPEFTIPVCLRHIETATGTPKRYAYLGEVFRQRRDGANEFYQAGIEDLGDINIPSADARAIGDATGILARLLPGRRLSVTLGDQAVFEAVVQALGLPLGWQKRLIHAFGNMTQLEALLAGLVSPQFVTGLDDDIARLIAAGDEQALIAHIEQEMQATGYSTNASRSPPEIARRLKEKLVLSETRLDDAAFHVLEEFLSLHVPLVNASAALAGFADAAGLKLGNALSRFNGRVGALADAGVDLSCLDYRAAFGRPLDYYTGLVFEVTAEGSSAVLAGGGRFDRLLTFLGATDRIPAVGFSFWLDRIETERAAA.

The protein belongs to the class-II aminoacyl-tRNA synthetase family. HisZ subfamily. Heteromultimer composed of HisG and HisZ subunits.

It localises to the cytoplasm. It functions in the pathway amino-acid biosynthesis; L-histidine biosynthesis; L-histidine from 5-phospho-alpha-D-ribose 1-diphosphate: step 1/9. Required for the first step of histidine biosynthesis. May allow the feedback regulation of ATP phosphoribosyltransferase activity by histidine. The polypeptide is ATP phosphoribosyltransferase regulatory subunit (Rhizobium etli (strain CIAT 652)).